The sequence spans 129 residues: Serum amyloid A-2 protein (129 aa).

A signal peptide spans 1–18 (MKLFTGLIFCSLVLGVHS). Q19 is modified (pyrrolidone carboxylic acid). Residues 90 to 103 (KHGDSGHGVEDSRA) show a composition bias toward basic and acidic residues. Residues 90 to 129 (KHGDSGHGVEDSRADQAANEWGRSGKDPNHFRPPGLPDKY) form a disordered region.

It belongs to the SAA family. Apolipoprotein of the HDL complex.

The protein resides in the secreted. In terms of biological role, major acute phase reactant. The polypeptide is Serum amyloid A-2 protein (Sus scrofa (Pig)).